A 479-amino-acid polypeptide reads, in one-letter code: GTPase Obg (479 aa).

An Obg domain is found at 2 to 159; it reads PRFVDRVVIH…RDLTLELKTV (158 aa). The 181-residue stretch at 160–340 folds into the OBG-type G domain; it reads ADVGLVGFPS…LIFGLSQMIS (181 aa). GTP is bound by residues 166–173, 191–195, 212–215, 292–295, and 321–323; these read GFPSAGKS, FTTLV, DVPG, NKID, and STA. The Mg(2+) site is built by Ser-173 and Thr-193. The 79-residue stretch at 358-436 folds into the OCT domain; that stretch reads PIPVDDSGFT…IGEMTFDWEP (79 aa). Residues 434 to 479 are disordered; it reads WEPQTPAGEPVAMSGRGTDPRLDSNKRVGAAERKAARSRRREHGDG. The span at 451–468 shows a compositional bias: basic and acidic residues; the sequence is TDPRLDSNKRVGAAERKA. Residues 469–479 are compositionally biased toward basic residues; the sequence is ARSRRREHGDG.

Belongs to the TRAFAC class OBG-HflX-like GTPase superfamily. OBG GTPase family. Monomer. It depends on Mg(2+) as a cofactor.

Its subcellular location is the cytoplasm. An essential GTPase which binds GTP, GDP and possibly (p)ppGpp with moderate affinity, with high nucleotide exchange rates and a fairly low GTP hydrolysis rate. Plays a role in control of the cell cycle, stress response, ribosome biogenesis and in those bacteria that undergo differentiation, in morphogenesis control. This Mycobacterium tuberculosis (strain ATCC 25177 / H37Ra) protein is GTPase Obg.